A 197-amino-acid polypeptide reads, in one-letter code: Small ribosomal subunit protein uS4c (197 aa).

Residues 82 to 143 form the S4 RNA-binding domain; the sequence is MRLDNILFRL…KQRSKALIQN (62 aa).

It belongs to the universal ribosomal protein uS4 family. As to quaternary structure, part of the 30S ribosomal subunit. Contacts protein S5. The interaction surface between S4 and S5 is involved in control of translational fidelity.

The protein localises to the plastid. The protein resides in the chloroplast. Its function is as follows. One of the primary rRNA binding proteins, it binds directly to 16S rRNA where it nucleates assembly of the body of the 30S subunit. Functionally, with S5 and S12 plays an important role in translational accuracy. In Gladiolus papilio (Goldblotch gladiolus), this protein is Small ribosomal subunit protein uS4c (rps4).